The chain runs to 407 residues: Proteasome-activating nucleotidase (407 aa).

A coiled-coil region spans residues 22–67 (KEKTQIAELESKVLRLELKNKDVTRENVQIKKENEILKRELDKLRI). Residues 192–197 (GTGKTL) and H331 contribute to the ATP site. The interval 405 to 407 (MYG) is docks into pockets in the proteasome alpha-ring to cause gate opening.

It belongs to the AAA ATPase family. Homohexamer. The hexameric complex has a two-ring architecture resembling a top hat that caps the 20S proteasome core at one or both ends. Upon ATP-binding, the C-terminus of PAN interacts with the alpha-rings of the proteasome core by binding to the intersubunit pockets.

The protein localises to the cytoplasm. Functionally, ATPase which is responsible for recognizing, binding, unfolding and translocation of substrate proteins into the archaeal 20S proteasome core particle. Is essential for opening the gate of the 20S proteasome via an interaction with its C-terminus, thereby allowing substrate entry and access to the site of proteolysis. Thus, the C-termini of the proteasomal ATPase function like a 'key in a lock' to induce gate opening and therefore regulate proteolysis. Unfolding activity requires energy from ATP hydrolysis, whereas ATP binding alone promotes ATPase-20S proteasome association which triggers gate opening, and supports translocation of unfolded substrates. This is Proteasome-activating nucleotidase from Methanococcus maripaludis (strain C7 / ATCC BAA-1331).